Here is a 157-residue protein sequence, read N- to C-terminus: UPF0225 protein PA14_50900 (157 aa).

Belongs to the UPF0225 family.

The sequence is that of UPF0225 protein PA14_50900 from Pseudomonas aeruginosa (strain UCBPP-PA14).